A 236-amino-acid polypeptide reads, in one-letter code: Phosphatidylserine decarboxylase proenzyme (236 aa).

Residue Ser203 is the Schiff-base intermediate with substrate; via pyruvic acid of the active site. Ser203 carries the pyruvic acid (Ser); by autocatalysis modification.

Belongs to the phosphatidylserine decarboxylase family. PSD-A subfamily. Heterodimer of a large membrane-associated beta subunit and a small pyruvoyl-containing alpha subunit. Pyruvate is required as a cofactor. In terms of processing, is synthesized initially as an inactive proenzyme. Formation of the active enzyme involves a self-maturation process in which the active site pyruvoyl group is generated from an internal serine residue via an autocatalytic post-translational modification. Two non-identical subunits are generated from the proenzyme in this reaction, and the pyruvate is formed at the N-terminus of the alpha chain, which is derived from the carboxyl end of the proenzyme. The post-translation cleavage follows an unusual pathway, termed non-hydrolytic serinolysis, in which the side chain hydroxyl group of the serine supplies its oxygen atom to form the C-terminus of the beta chain, while the remainder of the serine residue undergoes an oxidative deamination to produce ammonia and the pyruvoyl prosthetic group on the alpha chain.

The protein resides in the cell membrane. The catalysed reaction is a 1,2-diacyl-sn-glycero-3-phospho-L-serine + H(+) = a 1,2-diacyl-sn-glycero-3-phosphoethanolamine + CO2. It functions in the pathway phospholipid metabolism; phosphatidylethanolamine biosynthesis; phosphatidylethanolamine from CDP-diacylglycerol: step 2/2. Functionally, catalyzes the formation of phosphatidylethanolamine (PtdEtn) from phosphatidylserine (PtdSer). The chain is Phosphatidylserine decarboxylase proenzyme from Saccharopolyspora erythraea (strain ATCC 11635 / DSM 40517 / JCM 4748 / NBRC 13426 / NCIMB 8594 / NRRL 2338).